The primary structure comprises 319 residues: MNPEYLDFEQPIAELEYKLNELKQFSEQSKVDISDEVERLKTKLERLTGDIYSDLSDWQIAQVARHPKRPYTLDYIPHIFTDFRELHGDRHYADDMAIVGGLARLGQRSVMVIGHEKGRDTKAKVSRNFGMPRPEGYRKALRLMKLAEKFKIPVITFIDTPGAYPGVGAEKRGQSEAIARNLYEMAVLNTPIIACVIGEGGSGGALALGVADTVMMLQYGMYSVISPEGCASILWRDAAMAEEAVTILQVTSTRLKKLNLIDTIITEPSGGAHRDVAEMSRTLHDAFLSELDRLEAMDDATRIHQRLQKLRAYGNFLGE.

A CoA carboxyltransferase C-terminal domain is found at 36–293 (EVERLKTKLE…HDAFLSELDR (258 aa)).

Belongs to the AccA family. In terms of assembly, acetyl-CoA carboxylase is a heterohexamer composed of biotin carboxyl carrier protein (AccB), biotin carboxylase (AccC) and two subunits each of ACCase subunit alpha (AccA) and ACCase subunit beta (AccD).

Its subcellular location is the cytoplasm. The enzyme catalyses N(6)-carboxybiotinyl-L-lysyl-[protein] + acetyl-CoA = N(6)-biotinyl-L-lysyl-[protein] + malonyl-CoA. The protein operates within lipid metabolism; malonyl-CoA biosynthesis; malonyl-CoA from acetyl-CoA: step 1/1. In terms of biological role, component of the acetyl coenzyme A carboxylase (ACC) complex. First, biotin carboxylase catalyzes the carboxylation of biotin on its carrier protein (BCCP) and then the CO(2) group is transferred by the carboxyltransferase to acetyl-CoA to form malonyl-CoA. This Dichelobacter nodosus (strain VCS1703A) protein is Acetyl-coenzyme A carboxylase carboxyl transferase subunit alpha.